We begin with the raw amino-acid sequence, 306 residues long: Protein YIPF1 (306 aa).

At 1 to 119 (MAAVDDLQFE…VRLYIRSNPD (119 aa)) the chain is on the cytoplasmic side. The interval 30–63 (IEDPSVSFGHQPRPPGSVGREEDEELLGNNDSDE) is disordered. The segment covering 50 to 63 (EEDEELLGNNDSDE) has biased composition (acidic residues). A helical membrane pass occupies residues 120 to 140 (LYGPFWICATLVFAIAISGNL). At 141-162 (SNFLIHLGEKTYHYVPEFQKVS) the chain is on the lumenal side. The helical transmembrane segment at 163–183 (IAATVIYAYAWLVPLALWGFL) threads the bilayer. The Cytoplasmic segment spans residues 184–200 (LWRNSKVMSMVSYSFLE). Residues 201-221 (IVCVYGYSLFIYIPTAVLWII) form a helical membrane-spanning segment. At 222–227 (PQRVVR) the chain is on the lumenal side. A helical transmembrane segment spans residues 228-248 (WVLVMIALGVSGSVLVMTFWP). At 249 to 256 (AVREDNRR) the chain is on the cytoplasmic side. A helical membrane pass occupies residues 257–277 (VALATIVTIVLLHVLLSVGCL). Residues 278-306 (AYFFDAPEMDHLPAAITTPNQTVTAAKSS) lie on the Lumenal side of the membrane. An N-linked (GlcNAc...) asparagine glycan is attached at Asn-297.

It belongs to the YIP1 family. As to quaternary structure, interacts with YIPF6; this interaction may stabilize YIPF1. May also form a ternary complex with YIPF2 and YIPF6.

It is found in the golgi apparatus. The protein resides in the cis-Golgi network membrane. The protein localises to the trans-Golgi network membrane. It localises to the late endosome membrane. This is Protein YIPF1 (Yipf1) from Mus musculus (Mouse).